The sequence spans 1365 residues: Homeotic protein spalt-major (1365 aa).

Disordered stretches follow at residues 47-194 (SADK…EVTL), 270-298 (QAKQEEDTEEDADQEQDQEQETDTYEEEE), and 322-363 (LINA…NTHK). 2 stretches are compositionally biased toward low complexity: residues 63 to 76 (SPLTTATTTASPSR) and 87 to 99 (EQSTSEQSIPEQS). Residues 103–117 (HQLENDIKSEAKSEI) are compositionally biased toward basic and acidic residues. Residues 146–157 (PSSPVAEASAEE) show a composition bias toward low complexity. Residues 159-181 (ATERTPEKEKEKDVEVDVEKPDE) are compositionally biased toward basic and acidic residues. Residues 275–298 (EDTEEDADQEQDQEQETDTYEEEE) are compositionally biased toward acidic residues. Residues 346-363 (HDHESQPNRRPSLDNTHK) show a composition bias toward basic and acidic residues. C2H2-type zinc fingers lie at residues 451-473 (HRCRYCGKVFGSDSALQIHIRSH) and 479-501 (FKCNVCGSRFTTKGNLKVHFQRH). 2 disordered regions span residues 508–554 (VPMN…ASFP) and 586–716 (ELPT…TPGQ). The segment covering 530–539 (MSPTDSSPNH) has biased composition (polar residues). Residues 540–554 (SPAPPPLGSAPASFP) show a composition bias toward pro residues. 2 stretches are compositionally biased toward basic and acidic residues: residues 603–622 (PQVKNEPVEEKDQREEHEQE) and 638–662 (VRIKEERVEEQEQVKQEDHRIEPRR). 2 positions are modified to phosphoserine: Ser739 and Ser744. Residues 740 to 772 (PEHHSPVRSPAGGALPPGVPPPPHHHPHHMARS) form a disordered region. 3 consecutive C2H2-type zinc fingers follow at residues 824-846 (NQCVVCDRVLSCKSALQMHYRTH), 852-874 (FKCRICGRAFTTKGNLKTHMAVH), and 884-906 (HQCPVCHKKYSNALVLQQHIRLH). Disordered stretches follow at residues 948–1012 (ALPG…RSGD), 1030–1129 (VVNT…ILTS), and 1146–1241 (HHLQ…GARP). Residues 976–991 (DMDDNMDCGEDYDDDV) are compositionally biased toward acidic residues. Over residues 1040–1054 (SSASSHGHSVGSTSA) the composition is skewed to low complexity. Polar residues predominate over residues 1055 to 1079 (PTSPSVHASSQVIKRSSSPARSEAS). A phosphoserine mark is found at Ser1076 and Ser1079. 3 stretches are compositionally biased toward low complexity: residues 1085–1100 (LTPRAAPTSSSSSRSP), 1114–1123 (RSPSGSSHAS), and 1146–1168 (HHLQQQHQHLMQQQAAVAAAAAA). Residues 1181 to 1191 (QHQEQLRREAA) are compositionally biased toward basic and acidic residues. Low complexity predominate over residues 1192-1218 (EAQQKAAAAAAAAAAAAAAQRQTPPQA). 2 consecutive C2H2-type zinc fingers follow at residues 1289-1311 (TTCGICYKTFPCHSALEIHYRSH) and 1317-1339 (FKCSICDRGFTTKGNLKQHMLTH).

It belongs to the sal C2H2-type zinc-finger protein family.

Its subcellular location is the nucleus. In terms of biological role, required for the establishment of the posterior-most head and the anterior-most tail segments of the embryo. Probably function as a transcriptional regulator. Could repress the transcription of the tsh gene. The polypeptide is Homeotic protein spalt-major (salm) (Drosophila melanogaster (Fruit fly)).